The chain runs to 182 residues: uncharacterized protein (182 aa).

2 disordered regions span residues 1 to 49 (MAAP…DGGS) and 126 to 171 (QGGH…VHAQ). Basic and acidic residues predominate over residues 17–39 (ELLEKAARLERGPPPRGDPEAVG).

This is an uncharacterized protein from Homo sapiens (Human).